Here is a 158-residue protein sequence, read N- to C-terminus: Cyclic pyranopterin monophosphate synthase (158 aa).

Residues 74–76 and 112–113 each bind substrate; these read MCH and ME. Asp127 is a catalytic residue.

It belongs to the MoaC family. In terms of assembly, homohexamer; trimer of dimers.

The enzyme catalyses (8S)-3',8-cyclo-7,8-dihydroguanosine 5'-triphosphate = cyclic pyranopterin phosphate + diphosphate. It functions in the pathway cofactor biosynthesis; molybdopterin biosynthesis. In terms of biological role, catalyzes the conversion of (8S)-3',8-cyclo-7,8-dihydroguanosine 5'-triphosphate to cyclic pyranopterin monophosphate (cPMP). The protein is Cyclic pyranopterin monophosphate synthase of Helicobacter pylori (strain J99 / ATCC 700824) (Campylobacter pylori J99).